Consider the following 679-residue polypeptide: UvrABC system protein B (679 aa).

The 152-residue stretch at 25-176 (YGVNQGKQYQ…NVRESLRELV (152 aa)) folds into the Helicase ATP-binding domain. 38–45 (GATGTGKT) provides a ligand contact to ATP. The short motif at 91 to 114 (YYDYYQPEAYVPVSDTYIAKTSSV) is the Beta-hairpin element. The Helicase C-terminal domain maps to 429 to 591 (QIDDLLDEIR…IIPKPAGKKP (163 aa)). The UVR domain maps to 639-674 (PEIIDKLEGKMNLAAEELDFEQAAKLRDRIRQLRKK).

Belongs to the UvrB family. In terms of assembly, forms a heterotetramer with UvrA during the search for lesions. Interacts with UvrC in an incision complex.

It is found in the cytoplasm. Functionally, the UvrABC repair system catalyzes the recognition and processing of DNA lesions. A damage recognition complex composed of 2 UvrA and 2 UvrB subunits scans DNA for abnormalities. Upon binding of the UvrA(2)B(2) complex to a putative damaged site, the DNA wraps around one UvrB monomer. DNA wrap is dependent on ATP binding by UvrB and probably causes local melting of the DNA helix, facilitating insertion of UvrB beta-hairpin between the DNA strands. Then UvrB probes one DNA strand for the presence of a lesion. If a lesion is found the UvrA subunits dissociate and the UvrB-DNA preincision complex is formed. This complex is subsequently bound by UvrC and the second UvrB is released. If no lesion is found, the DNA wraps around the other UvrB subunit that will check the other stand for damage. The protein is UvrABC system protein B of Prochlorococcus marinus (strain MIT 9211).